Reading from the N-terminus, the 333-residue chain is Ketol-acid reductoisomerase (NADP(+)) (333 aa).

One can recognise a KARI N-terminal Rossmann domain in the interval Met1–Thr171. NADP(+)-binding positions include Tyr14–Gln17, Arg37, Thr42, and Asp72–Gln75. Residue His97 is part of the active site. Gly123 lines the NADP(+) pocket. The KARI C-terminal knotted domain occupies Thr172–Leu317. Mg(2+) contacts are provided by Asp180, Glu184, Glu216, and Glu220. Position 241 (Ser241) interacts with substrate.

This sequence belongs to the ketol-acid reductoisomerase family. The cofactor is Mg(2+).

It catalyses the reaction (2R)-2,3-dihydroxy-3-methylbutanoate + NADP(+) = (2S)-2-acetolactate + NADPH + H(+). The catalysed reaction is (2R,3R)-2,3-dihydroxy-3-methylpentanoate + NADP(+) = (S)-2-ethyl-2-hydroxy-3-oxobutanoate + NADPH + H(+). Its pathway is amino-acid biosynthesis; L-isoleucine biosynthesis; L-isoleucine from 2-oxobutanoate: step 2/4. It functions in the pathway amino-acid biosynthesis; L-valine biosynthesis; L-valine from pyruvate: step 2/4. Functionally, involved in the biosynthesis of branched-chain amino acids (BCAA). Catalyzes an alkyl-migration followed by a ketol-acid reduction of (S)-2-acetolactate (S2AL) to yield (R)-2,3-dihydroxy-isovalerate. In the isomerase reaction, S2AL is rearranged via a Mg-dependent methyl migration to produce 3-hydroxy-3-methyl-2-ketobutyrate (HMKB). In the reductase reaction, this 2-ketoacid undergoes a metal-dependent reduction by NADPH to yield (R)-2,3-dihydroxy-isovalerate. This is Ketol-acid reductoisomerase (NADP(+)) from Xanthomonas campestris pv. campestris (strain 8004).